Reading from the N-terminus, the 634-residue chain is Chaperone protein HtpG (634 aa).

Positions 1–344 (MSETVSQNKE…SNDLPLNVSR (344 aa)) are a; substrate-binding. The b stretch occupies residues 345–561 (EILQDNKVTQ…DYEMGTQMAK (217 aa)). A c region spans residues 562 to 634 (LLAAAGQAVP…GAINKLLTKV (73 aa)).

It belongs to the heat shock protein 90 family. Homodimer.

It localises to the cytoplasm. Molecular chaperone. Has ATPase activity. The polypeptide is Chaperone protein HtpG (Vibrio parahaemolyticus serotype O3:K6 (strain RIMD 2210633)).